The chain runs to 300 residues: tRNA dimethylallyltransferase (300 aa).

An ATP-binding site is contributed by 9–16 (GPTASGKS). 11–16 (TASGKS) is a binding site for substrate. The segment at 34–37 (DSKQ) is interaction with substrate tRNA.

This sequence belongs to the IPP transferase family. Monomer. The cofactor is Mg(2+).

It catalyses the reaction adenosine(37) in tRNA + dimethylallyl diphosphate = N(6)-dimethylallyladenosine(37) in tRNA + diphosphate. Its function is as follows. Catalyzes the transfer of a dimethylallyl group onto the adenine at position 37 in tRNAs that read codons beginning with uridine, leading to the formation of N6-(dimethylallyl)adenosine (i(6)A). In Ehrlichia canis (strain Jake), this protein is tRNA dimethylallyltransferase.